Here is a 75-residue protein sequence, read N- to C-terminus: uncharacterized protein (75 aa).

This is an uncharacterized protein from Acidianus filamentous virus 1 (isolate United States/Yellowstone) (AFV-1).